The sequence spans 149 residues: Transcriptional regulator MraZ (149 aa).

SpoVT-AbrB domains lie at 6 to 52 and 81 to 124; these read HAHR…TPPD and SEEV…DKRE.

The protein belongs to the MraZ family. Forms oligomers.

The protein localises to the cytoplasm. It localises to the nucleoid. The sequence is that of Transcriptional regulator MraZ from Maridesulfovibrio salexigens (strain ATCC 14822 / DSM 2638 / NCIMB 8403 / VKM B-1763) (Desulfovibrio salexigens).